A 139-amino-acid chain; its full sequence is Natriuretic peptide Mf-NP (139 aa).

The N-terminal stretch at 1-25 is a signal peptide; that stretch reads MVGLSRLTGGGLLLVLALLPLALDG. Positions 26–75 are excised as a propeptide; that stretch reads KPLEEAPTAPSRIIPFSRPVRKESQAVLDPMVHPERPAGSGDDGDLSRLE. Cysteine 86 and cysteine 102 form a disulfide bridge. Positions 117–139 are excised as a propeptide; that stretch reads IIPFSRPVRKESRAALDRMQHPG.

Belongs to the natriuretic peptide family. As to expression, expressed by the venom gland.

The protein resides in the secreted. Its function is as follows. Natriuretic peptide that dose-dependently induces the rapid relaxation of rat aortic strips phenylephrine-precontracted. Acts by stimulating cGMP production in a dose-dependent manner (by probably activating NPR1 and/or NPR2). May also show potent hypotensive effects. This Micrurus fulvius (Eastern coral snake) protein is Natriuretic peptide Mf-NP.